Consider the following 343-residue polypeptide: Glyceraldehyde-3-phosphate dehydrogenase (343 aa).

Residues 13–14 (TI) and glycine 112 each bind NAD(+). 141 to 143 (SCN) provides a ligand contact to D-glyceraldehyde 3-phosphate. Cysteine 142 (nucleophile) is an active-site residue. Arginine 170 lines the NAD(+) pocket. D-glyceraldehyde 3-phosphate is bound at residue 196–197 (HA). Position 303 (glutamine 303) interacts with NAD(+).

Belongs to the glyceraldehyde-3-phosphate dehydrogenase family. Homotetramer.

The protein resides in the cytoplasm. It catalyses the reaction D-glyceraldehyde 3-phosphate + phosphate + NADP(+) = (2R)-3-phospho-glyceroyl phosphate + NADPH + H(+). It carries out the reaction D-glyceraldehyde 3-phosphate + phosphate + NAD(+) = (2R)-3-phospho-glyceroyl phosphate + NADH + H(+). Its pathway is carbohydrate degradation; glycolysis; pyruvate from D-glyceraldehyde 3-phosphate: step 1/5. In Aeropyrum pernix (strain ATCC 700893 / DSM 11879 / JCM 9820 / NBRC 100138 / K1), this protein is Glyceraldehyde-3-phosphate dehydrogenase (gap).